We begin with the raw amino-acid sequence, 73 residues long: MKLTCVLIIAVLFLTACQLTTGEQKDHAQRSADRNSKLTRQCTPVGGSCSRHYHCCSLYCNKNIGQCLATSYP.

Positions 1 to 22 (MKLTCVLIIAVLFLTACQLTTG) are cleaved as a signal peptide. The propeptide occupies 23 to 40 (EQKDHAQRSADRNSKLTR). Position 41 is a pyrrolidone carboxylic acid (glutamine 41). Disulfide bonds link cysteine 42-cysteine 56, cysteine 49-cysteine 60, and cysteine 55-cysteine 67.

This sequence belongs to the conotoxin O1 superfamily. In terms of tissue distribution, expressed by the venom duct.

Its subcellular location is the secreted. The sequence is that of Conotoxin ArMKLT2-022 from Conus arenatus (Sand-dusted cone).